The sequence spans 202 residues: Dephospho-CoA kinase (202 aa).

In terms of domain architecture, DPCK spans 6–202 (KVSITGDLSS…EYFYALKGAL (197 aa)). 14–19 (SSGKTE) contacts ATP.

Belongs to the CoaE family.

Its subcellular location is the cytoplasm. The catalysed reaction is 3'-dephospho-CoA + ATP = ADP + CoA + H(+). The protein operates within cofactor biosynthesis; coenzyme A biosynthesis; CoA from (R)-pantothenate: step 5/5. In terms of biological role, catalyzes the phosphorylation of the 3'-hydroxyl group of dephosphocoenzyme A to form coenzyme A. The protein is Dephospho-CoA kinase of Chlamydia abortus (strain DSM 27085 / S26/3) (Chlamydophila abortus).